We begin with the raw amino-acid sequence, 215 residues long: 3,4-dihydroxy-2-butanone 4-phosphate synthase (215 aa).

Residues 38–39 (RE), Asp43, 151–155 (RRGHT), and Glu175 each bind D-ribulose 5-phosphate. Glu39 contributes to the Mg(2+) binding site. His154 is a binding site for Mg(2+).

The protein belongs to the DHBP synthase family. As to quaternary structure, homodimer. Mg(2+) is required as a cofactor. Requires Mn(2+) as cofactor.

It catalyses the reaction D-ribulose 5-phosphate = (2S)-2-hydroxy-3-oxobutyl phosphate + formate + H(+). It functions in the pathway cofactor biosynthesis; riboflavin biosynthesis; 2-hydroxy-3-oxobutyl phosphate from D-ribulose 5-phosphate: step 1/1. Catalyzes the conversion of D-ribulose 5-phosphate to formate and 3,4-dihydroxy-2-butanone 4-phosphate. The chain is 3,4-dihydroxy-2-butanone 4-phosphate synthase from Haemophilus influenzae (strain 86-028NP).